A 235-amino-acid polypeptide reads, in one-letter code: 5'-methylthioadenosine/S-adenosylhomocysteine nucleosidase (235 aa).

Glu-12 (proton acceptor) is an active-site residue. Residues Gly-78, Ile-152, and 173–174 contribute to the substrate site; that span reads ME. The active-site Proton donor is the Asp-197.

The protein belongs to the PNP/UDP phosphorylase family. MtnN subfamily. In terms of assembly, homodimer.

The enzyme catalyses S-adenosyl-L-homocysteine + H2O = S-(5-deoxy-D-ribos-5-yl)-L-homocysteine + adenine. The catalysed reaction is S-methyl-5'-thioadenosine + H2O = 5-(methylsulfanyl)-D-ribose + adenine. It catalyses the reaction 5'-deoxyadenosine + H2O = 5-deoxy-D-ribose + adenine. Its pathway is amino-acid biosynthesis; L-methionine biosynthesis via salvage pathway; S-methyl-5-thio-alpha-D-ribose 1-phosphate from S-methyl-5'-thioadenosine (hydrolase route): step 1/2. Functionally, catalyzes the irreversible cleavage of the glycosidic bond in both 5'-methylthioadenosine (MTA) and S-adenosylhomocysteine (SAH/AdoHcy) to adenine and the corresponding thioribose, 5'-methylthioribose and S-ribosylhomocysteine, respectively. Also cleaves 5'-deoxyadenosine, a toxic by-product of radical S-adenosylmethionine (SAM) enzymes, into 5-deoxyribose and adenine. Thus, is required for in vivo function of the radical SAM enzymes biotin synthase and lipoic acid synthase, that are inhibited by 5'-deoxyadenosine accumulation. This Buchnera aphidicola subsp. Schizaphis graminum (strain Sg) protein is 5'-methylthioadenosine/S-adenosylhomocysteine nucleosidase.